The chain runs to 459 residues: MNRLPSSASALACSAHALNLIEKRTLDHEEMKALNREVIEYFKEHVNPGFLEYRKSVTAGGDYGAVEWQAGSLNTLVDTQGQEFIDCLGGFGIFNVGHRNPVVVSAVQNQLAKQPLHSQELLDPLRAMLAKTLAALTPGKLKYSFFCNSGTESVEAALKLAKAYQSPRGKFTFIATSGAFHGKSLGALSATAKSTFRKPFMPLLPGFRHVPFGNIEAMRTALNECKKTGDDVAAVILEPIQGEGGVILPPPGYLTAVRKLCDEFGALMILDEVQTGMGRTGKMFACEHENVQPDILCLAKALGGGVMPIGATIATEEVFSVLFDNPFLHTTTFGGNPLACAAALATINVLLEQNLPAQAEQKGDMLLDGFRQLAREYPDLVQEARGKGMLMAIEFVDNEIGYNFASEMFRQRVLVAGTLNNAKTIRIEPPLTLTIEQCELVIKAARKALAAMRVSVEEA.

Residues 150-151 (GT) and glutamine 274 each bind pyridoxal 5'-phosphate. Position 300 is an N6-(pyridoxal phosphate)lysine (lysine 300). Threonine 332 contributes to the pyridoxal 5'-phosphate binding site.

It belongs to the class-III pyridoxal-phosphate-dependent aminotransferase family. Putrescine aminotransferase subfamily. Pyridoxal 5'-phosphate is required as a cofactor.

The catalysed reaction is an alkane-alpha,omega-diamine + 2-oxoglutarate = an omega-aminoaldehyde + L-glutamate. The enzyme catalyses putrescine + 2-oxoglutarate = 1-pyrroline + L-glutamate + H2O. It carries out the reaction cadaverine + 2-oxoglutarate = 5-aminopentanal + L-glutamate. It participates in amine and polyamine degradation; putrescine degradation; 4-aminobutanal from putrescine (transaminase route): step 1/1. Catalyzes the aminotransferase reaction from putrescine to 2-oxoglutarate, leading to glutamate and 4-aminobutanal, which spontaneously cyclizes to form 1-pyrroline. This is the first step in one of two pathways for putrescine degradation, where putrescine is converted into 4-aminobutanoate (gamma-aminobutyrate or GABA) via 4-aminobutanal. Also functions as a cadaverine transaminase in a a L-lysine degradation pathway to succinate that proceeds via cadaverine, glutarate and L-2-hydroxyglutarate. The sequence is that of Putrescine aminotransferase from Escherichia coli (strain K12 / MC4100 / BW2952).